The following is a 269-amino-acid chain: Formamidopyrimidine-DNA glycosylase (269 aa).

The active-site Schiff-base intermediate with DNA is proline 2. Glutamate 3 functions as the Proton donor in the catalytic mechanism. Lysine 57 functions as the Proton donor; for beta-elimination activity in the catalytic mechanism. DNA contacts are provided by histidine 90, arginine 109, and lysine 150. The FPG-type zinc finger occupies 235-269 (QVYGRKGEPCRVCGTPIVATKHAQRATFYCRHCQK). Catalysis depends on arginine 259, which acts as the Proton donor; for delta-elimination activity.

This sequence belongs to the FPG family. As to quaternary structure, monomer. Zn(2+) is required as a cofactor.

It carries out the reaction Hydrolysis of DNA containing ring-opened 7-methylguanine residues, releasing 2,6-diamino-4-hydroxy-5-(N-methyl)formamidopyrimidine.. The catalysed reaction is 2'-deoxyribonucleotide-(2'-deoxyribose 5'-phosphate)-2'-deoxyribonucleotide-DNA = a 3'-end 2'-deoxyribonucleotide-(2,3-dehydro-2,3-deoxyribose 5'-phosphate)-DNA + a 5'-end 5'-phospho-2'-deoxyribonucleoside-DNA + H(+). In terms of biological role, involved in base excision repair of DNA damaged by oxidation or by mutagenic agents. Acts as a DNA glycosylase that recognizes and removes damaged bases. Has a preference for oxidized purines, such as 7,8-dihydro-8-oxoguanine (8-oxoG). Has AP (apurinic/apyrimidinic) lyase activity and introduces nicks in the DNA strand. Cleaves the DNA backbone by beta-delta elimination to generate a single-strand break at the site of the removed base with both 3'- and 5'-phosphates. This chain is Formamidopyrimidine-DNA glycosylase, found in Salmonella paratyphi C (strain RKS4594).